The following is a 390-amino-acid chain: 8-demethyl-8-(2-methoxy-alpha-L-rhamnosyl)-tetracenomycin-C 3'-O-methyltransferase (390 aa).

Residues 202-208, S217, D234, 252-253, and D275 contribute to the S-adenosyl-L-methionine site; these read ELGIGGY and SQ. A Mg(2+)-binding site is contributed by D275. The active-site Proton acceptor is H278. Residues E303 and D304 each contribute to the Mg(2+) site.

Belongs to the methyltransferase OleY/MycE family. The cofactor is Mg(2+).

It carries out the reaction 8-demethyl-8-(2-O-methyl-alpha-L-rhamnosyl)-tetracenomycin C + S-adenosyl-L-methionine = 8-demethyl-8-(2,3-di-O-methyl-alpha-L-rhamnosyl)-tetracenomycin C + S-adenosyl-L-homocysteine + H(+). It participates in antibiotic biosynthesis. Functionally, O-methyltransferase involved in the biosynthesis of the permethylated L-rhamnose moiety of elloramycin, an antitumor polyketide. Mediates the methylation of the hydroxy groups at the 3'-position after the sugar moiety has been attached to the aglycon. This is 8-demethyl-8-(2-methoxy-alpha-L-rhamnosyl)-tetracenomycin-C 3'-O-methyltransferase from Streptomyces olivaceus.